Here is a 270-residue protein sequence, read N- to C-terminus: MSRHATITQSYQERASLPKTSPVASYLLRLIAAKKTNLCVSADVSTTRELLQLAEEVGDSICMLKTHADIINDFGPRTIEGLKEIAAKKHFLVFEDRKFGDIGSTVQKQFTAGPLQIVRWANIINAHIFPGPAIITALSQARPRCRQLLILAEMSSAGNLMTGSYTEQCVVEARKNPEFVMGFIAQRTLNEQPGDNFITMTPGVQIGATGDGLGQQYNTPEKVIGEAGTDIIIVGRGVYGAQDKRAKAEEYRVRAWKAYEGNWRCYCNKR.

Substrate-binding positions include aspartate 43, 65–67, 96–105, tyrosine 217, and arginine 236; these read KTH and DRKFGDIGST. Lysine 98 acts as the Proton donor in catalysis.

It belongs to the OMP decarboxylase family.

The enzyme catalyses orotidine 5'-phosphate + H(+) = UMP + CO2. Its pathway is pyrimidine metabolism; UMP biosynthesis via de novo pathway; UMP from orotate: step 2/2. The sequence is that of Orotidine 5'-phosphate decarboxylase (URA3) from Aureobasidium pullulans (Black yeast).